A 229-amino-acid chain; its full sequence is uncharacterized protein (229 aa).

It to T.pallidum TP_0315, TP_0618 and TP_0619.

This is an uncharacterized protein from Treponema pallidum (strain Nichols).